The sequence spans 377 residues: MGTQGKVITCKAAIAWKTDSPLCIEEIEVSPPKAHEVRIKVIATCVCPTDINATNPKKKALFPVVLGHECAGIVESVGPGVTNFKPGDKVIPFFAPQCKKCKLCLSPLTNLCGKLRNFKYPTIDQELMEDRTSRFTSKERSIYHFMGVSSFSQYTVVSEANLARVDDEANLERVCLIGCGFTSGYGAAINTAKVTPGSACAVFGLGCVGLSAVIGCKIAGASRIIAIDINSEKFPKAKALGATDCLNPRDLDKPVQDVITELTGGGVDFSLDCAGTAQTLKAAVDCTVVGWGSCTVVGAKVDEMNISTVDMILGRSVKGTFFGGWKSVDSVPNLVTDYKNKKFDLDLLVTHALPFDKINDAIDLMNQGKSIRTILTF.

Cys47 provides a ligand contact to Zn(2+). Residue 48 to 49 (PT) coordinates NAD(+). Residues His68, Cys98, Cys101, Cys104, Cys112, and Cys179 each coordinate Zn(2+). NAD(+)-binding positions include 204–209 (GLGCVG), Asp228, Lys233, 297–299 (VGA), 320–322 (TFF), and Arg372.

It belongs to the zinc-containing alcohol dehydrogenase family. Class-II subfamily. In terms of assembly, dimer. Zn(2+) serves as cofactor. As to expression, liver specific.

It localises to the cytoplasm. It catalyses the reaction all-trans-retinol + NAD(+) = all-trans-retinal + NADH + H(+). The catalysed reaction is 9-cis-retinol + NAD(+) = 9-cis-retinal + NADH + H(+). The enzyme catalyses 20-oxo-(5Z,8Z,11Z,14Z)-eicosatetraenoate + NAD(+) + H2O = (5Z,8Z,11Z,14Z)-eicosatetraenedioate + NADH + 2 H(+). It carries out the reaction 20-hydroxy-(5Z,8Z,11Z,14Z)-eicosatetraenoate + NAD(+) = 20-oxo-(5Z,8Z,11Z,14Z)-eicosatetraenoate + NADH + H(+). It catalyses the reaction 1,4-benzoquinone + NADH + H(+) = hydroquinone + NAD(+). Its activity is regulated as follows. Oxidation of 20-HETE is inhibited by low concentrations of N-heptylformamide. Oxidation of 20-HETE is a decreased by 55-65% by either all-trans-retinol or all-trans-retinoic acid. Strongly inhibited by omega-hydroxy fatty acids. In terms of biological role, catalyzes the NAD-dependent oxidation of either all-trans-retinol or 9-cis-retinol. Also oxidizes long chain omega-hydroxy fatty acids, such as 20-HETE, producing both the intermediate aldehyde, 20-oxoarachidonate and the end product, a dicarboxylic acid, (5Z,8Z,11Z,14Z)-eicosatetraenedioate. Also catalyzes the reduction of benzoquinones. This Rattus norvegicus (Rat) protein is All-trans-retinol dehydrogenase [NAD(+)] ADH4.